Reading from the N-terminus, the 300-residue chain is MTHFSTIGLIGHLNNERAVYSIERLIRFLQQRGKDFVLEVETAARISDIALTQAARQIMDMDALGQICDLVIVVGGDGSLLSGARALAKYQVPLLGVNRGRLGFLTDITPEQIEQKMAEVLTGQFASEKRFLLDMEVRRDGQVIALADALNDVVLHTGQFIHMLEFEIHVDGSFVTSQRSDGLIVSTPTGSTAYSLSGGGPILHPKLDAIVIVPMNPHTLSSRPIVVSGDSEILLMVGEHNRALPMVTCDGHSHAEVQTGDEIIIRKKPQLLELLHPLDYNFYERCRSKLGWGGHLLKPE.

The active-site Proton acceptor is D77. NAD(+) contacts are provided by residues 77–78, 151–152, H162, R179, D181, and 192–197; these read DG, ND, and TAYSLS.

The protein belongs to the NAD kinase family. The cofactor is a divalent metal cation.

It is found in the cytoplasm. The enzyme catalyses NAD(+) + ATP = ADP + NADP(+) + H(+). In terms of biological role, involved in the regulation of the intracellular balance of NAD and NADP, and is a key enzyme in the biosynthesis of NADP. Catalyzes specifically the phosphorylation on 2'-hydroxyl of the adenosine moiety of NAD to yield NADP. The sequence is that of NAD kinase from Cellvibrio japonicus (strain Ueda107) (Pseudomonas fluorescens subsp. cellulosa).